A 382-amino-acid chain; its full sequence is MIOREX complex component 5 (382 aa).

The N-terminal 12 residues, 1-12 (MRRTFSQLATRL), are a transit peptide targeting the mitochondrion.

As to quaternary structure, associates with the mitochondrial ribosome.

It localises to the mitochondrion. Functionally, component of MIOREX complexes, large expressome-like assemblies of ribosomes with factors involved in all the steps of post-transcriptional gene expression. This Saccharomyces cerevisiae (strain ATCC 204508 / S288c) (Baker's yeast) protein is MIOREX complex component 5.